We begin with the raw amino-acid sequence, 188 residues long: Large ribosomal subunit protein bL35m (188 aa).

This sequence belongs to the bacterial ribosomal protein bL35 family.

The protein localises to the mitochondrion. This chain is Large ribosomal subunit protein bL35m (Mrpl35), found in Mus musculus (Mouse).